The following is a 189-amino-acid chain: 3-hydroxyanthranilate 3,4-dioxygenase (189 aa).

Arg50 serves as a coordination point for O2. Fe cation contacts are provided by His54, Glu60, and His102. Position 60 (Glu60) interacts with substrate. 2 residues coordinate substrate: Arg106 and Glu116. Positions 131, 136, 170, and 173 each coordinate a divalent metal cation.

The protein belongs to the 3-HAO family. Requires Fe(2+) as cofactor.

It is found in the cytoplasm. It carries out the reaction 3-hydroxyanthranilate + O2 = (2Z,4Z)-2-amino-3-carboxymuconate 6-semialdehyde. It participates in cofactor biosynthesis; NAD(+) biosynthesis; quinolinate from L-kynurenine: step 3/3. In terms of biological role, catalyzes the oxidative ring opening of 3-hydroxyanthranilate to 2-amino-3-carboxymuconate semialdehyde, which spontaneously cyclizes to quinolinate. The protein is 3-hydroxyanthranilate 3,4-dioxygenase (bna1) of Aspergillus niger (strain ATCC MYA-4892 / CBS 513.88 / FGSC A1513).